Reading from the N-terminus, the 85-residue chain is F1845 adhesin operon regulatory protein (85 aa).

Its function is as follows. Regulates the transcription of genes involved in the biosynthesis of F1845 fimbrial adhesin. In Escherichia coli, this protein is F1845 adhesin operon regulatory protein (daaA).